The following is a 1074-amino-acid chain: ADAMTS-like protein 4 (1074 aa).

A signal peptide spans 1–24; it reads MENWTGRPWLYLLLLLSLPQLCLD. Positions 48–93 constitute a TSP type-1 1 domain; that stretch reads GPWVQWASCSQPCGVGVQRRSRTCQLPTVQLHPSLPLPPRPPRHPE. The segment at 77 to 342 is disordered; the sequence is QLHPSLPLPP…QHPGAWLPLL (266 aa). Residues 103–119 show a composition bias toward polar residues; that stretch reads RPQTSPETLPLYRTQSR. Basic and acidic residues predominate over residues 132 to 152; that stretch reads LGREETQEIRAARRSRLRDPI. Residues 206-226 are compositionally biased toward polar residues; sequence ANGSPQTELPPTELSVHTPSP. Gly residues predominate over residues 310-323; sequence GQQGQGPWGTGGTP. Residue Asn490 is glycosylated (N-linked (GlcNAc...) (complex) asparagine). 5 consecutive TSP type-1 domains span residues 723–782, 783–842, 845–909, 910–969, and 970–1026; these read CPPY…QLRL, CGHW…GPCT, WFHS…GPCE, RTWR…QGQA, and CQDR…QPCS. Asn773 carries an N-linked (GlcNAc...) asparagine glycan. In terms of domain architecture, PLAC spans 1029-1066; the sequence is PDDQCKDSSPHCPLVVQARLCVYPYYTATCCRSCAHVL.

Interacts with CTSB. Interacts with FBN1. N-glycosylated. Can be O-fucosylated by POFUT2 on a serine or a threonine residue found within the consensus sequence C1-X(2)-(S/T)-C2-G of the TSP type-1 repeat domains where C1 and C2 are the first and second cysteine residue of the repeat, respectively. Fucosylated repeats can then be further glycosylated by the addition of a beta-1,3-glucose residue by the glucosyltransferase, B3GALTL. Fucosylation mediates the efficient secretion of ADAMTS family members. Can also be C-glycosylated with one or two mannose molecules on tryptophan residues within the consensus sequence W-X-X-W of the TPRs. N- and C-glycosylations can also facilitate secretion. In terms of tissue distribution, expressed in colon, heart, leukocyte, liver, lung, skeletal muscle, spleen, testis and placenta. Weaker expression in bone marrow, brain tissue, kidney and pancreas. Expression studies in fetal tissues reveal strong expression in heart, kidney, liver, lung and skeletal muscle, but weaker expression in fetal brain and skin.

The protein localises to the secreted. It is found in the extracellular space. The protein resides in the extracellular matrix. In terms of biological role, positive regulation of apoptosis. May facilitate FBN1 microfibril biogenesis. The sequence is that of ADAMTS-like protein 4 (ADAMTSL4) from Homo sapiens (Human).